Here is a 463-residue protein sequence, read N- to C-terminus: MNVKSIALSAVIATSFLAAGAMASEKTEPRNEVYKDKFSKQYDSWHATDESKEVVDMLEKVPSLVVLWAGYGFAKDYNAPRGHMYAVTDVTNTLRTGAPKNAEDGPMPMACWSCKSPDVPRVIEEQGEDGYFSGKWAKGGPEIVNVLGCADCHEKGSSKLRMSRPFAERAMTTLNTPFDKASRKDKQSMVCAQCHVEYYFEKTAERPGFVKFPWDMGTTVEQMEVYYDSMEFSDWTHAVSKTPMLKAQHPGYETWKLGVHGQNNVSCVDCHMPKVTNDKGRKFTDHKVGNPFDRFEETCATCHSQSKEFMVKQVEESKQKAQDLKARVETQLVKAHFEAKAAWDAGATEVEMKPILMDIRHSQWRWDYATASHGASSHAPAEVLRILGTSLDKAADARVKLAQLLGAKGVKQPIAYPDTSTKAKAQAALGMNMKTMNAEKAEFKKTLVPKWKEEAKKREATYK.

Positions 1–23 (MNVKSIALSAVIATSFLAAGAMA) are cleaved as a signal peptide. H83 contacts heme c. Heme-binding residues include C111, C114, and K115. Heme c-binding residues include C149, C152, H153, C191, C194, and H195. The Ca(2+) site is built by E197, Y198, K246, and Q248. Substrate is bound at residue Y198. Residue H249 coordinates substrate. Residues H260, C267, C270, H271, H286, C299, C302, H303, and H378 each coordinate heme c.

Belongs to the cytochrome c-552 family. It depends on Ca(2+) as a cofactor. Requires heme c as cofactor.

It localises to the periplasm. The catalysed reaction is 6 Fe(III)-[cytochrome c] + NH4(+) + 2 H2O = 6 Fe(II)-[cytochrome c] + nitrite + 8 H(+). Its pathway is nitrogen metabolism; nitrate reduction (assimilation). In terms of biological role, catalyzes the reduction of nitrite to ammonia, consuming six electrons in the process. The sequence is that of Cytochrome c-552 from Shewanella frigidimarina (strain NCIMB 400).